We begin with the raw amino-acid sequence, 638 residues long: Rik1-associated factor 1 (638 aa).

WD repeat units lie at residues Lys297 to Phe336, Thr486 to Ser525, Glu544 to Gln583, and Glu587 to Phe626.

In terms of assembly, component of the Clr4 methyltransferase complex (ClrC) composed of at least clr4, rik1, pcu4, rbx1, raf1 and raf2. The cullin pcu4, rik1, raf1, raf2 and the ring-box protein rbx1 are components of an E3 ubiquitin ligase, whose activity is essential for heterochromatin assembly. Interacts with nup189.

It localises to the cytoplasm. It is found in the nucleus. The protein resides in the chromosome. Functionally, component of the Clr4 methyltransferase complex (ClrC) which contributes to the establishment of heterochromatin by specifically methylating histone H3 to form H3K9me. ClrC preferentially ubiquitylates H3K14 and ClrC-mediated H3 ubiquitination promotes clr4 methyltransferase activity for the methylation of H3K9. H3K9me represents a specific tag for epigenetic transcriptional repression by recruiting swi6/HP1 to methylated histones which leads to transcriptional silencing within centromeric heterochromatin, telomeric regions and at the silent mating-type loci. Has a role in both mitotic and meiotic chromosome segregation. The sequence is that of Rik1-associated factor 1 (raf1) from Schizosaccharomyces pombe (strain 972 / ATCC 24843) (Fission yeast).